The following is a 1338-amino-acid chain: Thioester-containing protein 1 allele R1 (1338 aa).

The signal sequence occupies residues 1 to 21 (MWQFIRSRILTVIIFIGAAHG). 5 N-linked (GlcNAc...) asparagine glycosylation sites follow: asparagine 68, asparagine 199, asparagine 242, asparagine 312, and asparagine 481. The segment at 580–609 (ENEFDIFHSLGLFARTLDDILFDSANEKTG) is may contain the cleavage site. N-linked (GlcNAc...) asparagine glycans are attached at residues asparagine 637, asparagine 728, and asparagine 813. The isoglutamyl cysteine thioester (Cys-Gln) cross-link spans 859 to 862 (CGEQ). Residues asparagine 919 and asparagine 1065 are each glycosylated (N-linked (GlcNAc...) asparagine). Cystine bridges form between cysteine 1217-cysteine 1283, cysteine 1326-cysteine 1338, and cysteine 1329-cysteine 1334.

Heterodimer of a TEP1-N chain and an TEP1-C chain non-covalently linked. Forms a complex composed of TEP1-N and TEP1-C heterodimer, LRIM1 and APL1C; the interaction stabilizes TEP1-N and TEP1-C heterodimer, prevents its binding to tissues while circulating in the hemolymph and protects the thioester bond from hydrolysis. Mature TEP1 and to a lesser extent full-length TEP1 interact with SPCLIP1; the interaction is induced by microbial infection. In the hemolymph, the full-length protein is cleaved by an unknow protease into a 75kDa N-terminal (TEP1-N) chain and an 80kDa C-terminal (TEP1-C) chain which remain non-covalently linked. The TEP1-C chain contains the thioester bond which covalently binds to the pathogen surface. Cleavage is induced by bacterial infection or aseptic wound injury. During embryonic and pupal development, the cleaved form is the predominant form. Post-translationally, N-glycosylated.

The protein localises to the secreted. Its function is as follows. Plays an essential role in the innate immune response against bacteria, fungi and protozoa infection. After proteolytic cleavage, the protein C-terminus binds covalently through a thioester bond to the pathogen surface resulting in pathogen clearance either by melanization or lysis. Initiate the recruitment and activation of a cascade of proteases, mostly of CLIP-domain serine proteases, which leads to the proteolytic cleavage of the prophenoloxidase (PPO) into active phenoloxidase (PO), the rate-limiting enzyme in melanin biosynthesis. In response to parasite P.berghei-mediated infection, binds to and mediates killing of ookinetes, as they egress from midgut epithelial cells into the basal labyrinth, by both lysis and melanization. During bacterial infection, binds to both Gram-positive and Gram-negative bacteria but only promotes phagocytosis of Gram-negative bacteria. Promotes the accumulation of SPCLIP1 onto the surface of P.berghei ookinetes and bacterium E.coli which leads to the melanization of the pathogen. Recruits CLIPA2 to bacteria surface. In response to bacterial infection, required for periostial hemocyte aggregation, but not for the aggregation of sessile hemocytes in non-periostial regions. During the late stage of fungus B.bassiana-mediated infection, required for the initiation of hyphae melanization by binding to the surface of hyphae and recruiting prophenoloxidase PPO to them. Plays a role in male fertility by binding to defective sperm cells and promoting their removal during spermatogenesis. In terms of biological role, binds to and mediates killing of parasite P.bergei ookinetes by lysis and melanization. Functionally, binds covalently through a thioester bond to the pathogen surface resulting in pathogen clearance. This is Thioester-containing protein 1 allele R1 from Anopheles gambiae (African malaria mosquito).